A 76-amino-acid polypeptide reads, in one-letter code: ATP synthase subunit 9, mitochondrial (76 aa).

2 helical membrane-spanning segments follow: residues 14 to 34 (IATI…AALI) and 52 to 72 (ILGF…SFLL).

It belongs to the ATPase C chain family. As to quaternary structure, F-type ATPases have 2 components, CF(1) - the catalytic core - and CF(0) - the membrane proton channel. CF(1) has five subunits: alpha(3), beta(3), gamma(1), delta(1), epsilon(1). CF(0) has three main subunits: a, b and c.

It is found in the mitochondrion membrane. In terms of biological role, mitochondrial membrane ATP synthase (F(1)F(0) ATP synthase or Complex V) produces ATP from ADP in the presence of a proton gradient across the membrane which is generated by electron transport complexes of the respiratory chain. F-type ATPases consist of two structural domains, F(1) - containing the extramembraneous catalytic core and F(0) - containing the membrane proton channel, linked together by a central stalk and a peripheral stalk. During catalysis, ATP synthesis in the catalytic domain of F(1) is coupled via a rotary mechanism of the central stalk subunits to proton translocation. Part of the complex F(0) domain. A homomeric c-ring of probably 10 subunits is part of the complex rotary element. This chain is ATP synthase subunit 9, mitochondrial (ATP9), found in Wickerhamomyces canadensis (Yeast).